We begin with the raw amino-acid sequence, 595 residues long: Metacaspase-1 (595 aa).

Active-site residues include H411 and C466.

Belongs to the peptidase C14B family. In terms of assembly, monomer.

Its activity is regulated as follows. Activated by Ca(2+). In terms of biological role, cysteine protease that cleaves specifically after arginine or lysine residues. This Plasmodium berghei (strain Anka) protein is Metacaspase-1.